The sequence spans 372 residues: GDP-mannose 4,6 dehydratase (372 aa).

Positions 1 to 20 (MAHAPARCPSARGSGDGEMG) are disordered. Residue alanine 2 is modified to N-acetylalanine. NADP(+) contacts are provided by residues 30–35 (GITGQD), 55–58 (RRSS), 86–87 (DL), 108–112 (LGAQS), and tyrosine 123. Threonine 155 is an active-site residue. Active-site nucleophile residues include glutamate 157 and tyrosine 179. Residues lysine 183, histidine 209, and arginine 214 each coordinate NADP(+). Tyrosine 323 is modified (phosphotyrosine).

This sequence belongs to the NAD(P)-dependent epimerase/dehydratase family. GDP-mannose 4,6-dehydratase subfamily. Requires NADP(+) as cofactor. As to expression, highly expressed in pancreas and small intestine. Expressed in thymus, protstate, colon, heart, placenta, liver and kidney. Expressed at low levels in spleen, testis, brain and lung.

The enzyme catalyses GDP-alpha-D-mannose = GDP-4-dehydro-alpha-D-rhamnose + H2O. It functions in the pathway nucleotide-sugar biosynthesis; GDP-L-fucose biosynthesis via de novo pathway; GDP-L-fucose from GDP-alpha-D-mannose: step 1/2. Its activity is regulated as follows. Inhibited by GDP-fucose. Functionally, catalyzes the conversion of GDP-D-mannose to GDP-4-dehydro-6-deoxy-D-mannose. The chain is GDP-mannose 4,6 dehydratase from Homo sapiens (Human).